A 168-amino-acid polypeptide reads, in one-letter code: SsrA-binding protein (168 aa).

Residues 1-20 (MAAQSKQAKPSGKQGGKKII) are disordered.

It belongs to the SmpB family.

The protein resides in the cytoplasm. Required for rescue of stalled ribosomes mediated by trans-translation. Binds to transfer-messenger RNA (tmRNA), required for stable association of tmRNA with ribosomes. tmRNA and SmpB together mimic tRNA shape, replacing the anticodon stem-loop with SmpB. tmRNA is encoded by the ssrA gene; the 2 termini fold to resemble tRNA(Ala) and it encodes a 'tag peptide', a short internal open reading frame. During trans-translation Ala-aminoacylated tmRNA acts like a tRNA, entering the A-site of stalled ribosomes, displacing the stalled mRNA. The ribosome then switches to translate the ORF on the tmRNA; the nascent peptide is terminated with the 'tag peptide' encoded by the tmRNA and targeted for degradation. The ribosome is freed to recommence translation, which seems to be the essential function of trans-translation. The chain is SsrA-binding protein from Mycobacterium ulcerans (strain Agy99).